Consider the following 267-residue polypeptide: Methylglyoxal reductase DkgB (267 aa).

Tyr39 (proton donor) is an active-site residue. His97 is a binding site for substrate. 179–231 (MTLAYGKALKDEVIARIAVKHNATPVQVILAWAMGEGYSVIPSSTRRENLASN) is a binding site for NADP(+).

It belongs to the aldo/keto reductase family. In terms of assembly, monomer.

The protein localises to the cytoplasm. It carries out the reaction hydroxyacetone + NADP(+) = methylglyoxal + NADPH + H(+). In terms of biological role, aldo-keto reductase that significantly contributes to cellular methylglyoxal detoxification by catalyzing the NADPH-dependent conversion of methylglyoxal to acetol. The protein is Methylglyoxal reductase DkgB of Salmonella typhi.